The primary structure comprises 652 residues: Probable export ATP-binding/permease protein PFL_2149 (652 aa).

The ABC transporter domain occupies 6-244 (LHLTGISRSF…APSEPPVSVR (239 aa)). Residue 42 to 49 (GASGSGKS) participates in ATP binding. 5 consecutive transmembrane segments (helical) span residues 251–271 (LVAS…ALVS), 277–297 (LLTM…VAIG), 525–545 (LALL…IGVM), 586–606 (IGGA…TLFI), and 615–635 (MGSI…FGFV).

Belongs to the ABC transporter superfamily. Macrolide exporter (TC 3.A.1.122) family. In terms of assembly, probably part of a tripartite efflux system, which is composed of an inner membrane transporter, a periplasmic membrane fusion protein, and an outer membrane component.

The protein localises to the cell inner membrane. In terms of biological role, probably part of a tripartite efflux system. The protein is Probable export ATP-binding/permease protein PFL_2149 of Pseudomonas fluorescens (strain ATCC BAA-477 / NRRL B-23932 / Pf-5).